Consider the following 750-residue polypeptide: Photosystem I P700 chlorophyll a apoprotein A1 (750 aa).

8 helical membrane passes run V70–A93, L156–H179, L195–L219, I291–Y309, W346–Y369, L385–V411, A433–H455, and F531–L549. C573 and C582 together coordinate [4Fe-4S] cluster. 2 helical membrane-spanning segments follow: residues H589–W610 and L664–F686. H675 is a chlorophyll a' binding site. Chlorophyll a-binding residues include M683 and Y691. W692 contributes to the phylloquinone binding site. The helical transmembrane segment at A724–A744 threads the bilayer.

This sequence belongs to the PsaA/PsaB family. The PsaA/B heterodimer binds the P700 chlorophyll special pair and subsequent electron acceptors. PSI consists of a core antenna complex that captures photons, and an electron transfer chain that converts photonic excitation into a charge separation. The eukaryotic PSI reaction center is composed of at least 11 subunits. The cofactor is P700 is a chlorophyll a/chlorophyll a' dimer, A0 is one or more chlorophyll a, A1 is one or both phylloquinones and FX is a shared 4Fe-4S iron-sulfur center..

Its subcellular location is the plastid. It is found in the chloroplast thylakoid membrane. The enzyme catalyses reduced [plastocyanin] + hnu + oxidized [2Fe-2S]-[ferredoxin] = oxidized [plastocyanin] + reduced [2Fe-2S]-[ferredoxin]. Its function is as follows. PsaA and PsaB bind P700, the primary electron donor of photosystem I (PSI), as well as the electron acceptors A0, A1 and FX. PSI is a plastocyanin-ferredoxin oxidoreductase, converting photonic excitation into a charge separation, which transfers an electron from the donor P700 chlorophyll pair to the spectroscopically characterized acceptors A0, A1, FX, FA and FB in turn. Oxidized P700 is reduced on the lumenal side of the thylakoid membrane by plastocyanin. The chain is Photosystem I P700 chlorophyll a apoprotein A1 from Lepidium virginicum (Virginia pepperweed).